The following is a 1233-amino-acid chain: MASSNPPPQPAIGDQLVPGAPGPSSEAEDDPGEAFEFDDSDDEEDTSAALGVPSLAPERDTDPPLIHLDSIPVTDPDPAAAPPGTGVPAWVSNGDAADAAFSGARHSSWKRKSSRRIDRFTFPALEEDVIYDDVPCESPDAHQPGAERNLLYEDAHRAGAPRQAEDLGWSSSEFESYSEDSGEEAKPEVEPAKHRVSFQPKMTQLMKAAKSGTKDGLEKTRMAVMRKVSFLHRKDVLGDSEEEDMGLLEVSVSDIKPPAPELGPMPEGLSPQQVVRRHILGSIVQSEGSYVESLKRILQDYRNPLMEMEPKALSARKCQVVFFRVKEILHCHSMFQIALSSRVAEWDSTEKIGDLFVASFSKSMVLDVYSDYVNNFTGAMSIIKKACLTKPAFLEFLKRRQVCSSDRVTLYGLMVKPIQRFPQFILLLQDMLKNTPRGHPDRLSLQLALTELETLAEKLNEQKRLADQVAEIQQLTKSVSDRSSLNKLLTSGQRQLLLCETLTETVYGDRGQLIKSKERRVFLLNDMLVCANINFKGQLEISSLVPLGPKYVVKWNTALPQVQVVEVGQDGGTYDKDNVLIQHSGAKKASASGQAQNKVYLGPPRLFQELQDLQKDLAVVEQITLLISTLHGTYQNLNMTVAQDWCLALQRLMRVKEEEIHSANKCRLRLLLPGKPDKSGRPTSFMVVFITPNPLSKISWVNRLHLAKIGLREENQPGWLCPDEDKKSKAPFWCPILACCIPAFSSRALSLQLGALVHSPVNCPLLGFSAVSTSLPQGYLWVGGGQEGAGGQVEIFSLNRPSPRTVKSFPLAAPVLCMEYIPELEEEAESRDESPTAADPSATVHPTICLGLQDGSILLYGSVDTGTQCLASCRSPGLQPVLCLRHSPFYLLAGLQDGTLAAYPRTSGGVLWDLESPPVCLTVGPGPVRTLLSLEDAVWASCGPRVTVLEATTLQPQQSFEAHQDEAVSVTHMVKAGSGVWMAFSSGTSIRLFHTETLEHLQEINIATRTTFLLPGQKHLCVTSLLICQGLLWVGTDQGVIVLLPVPRLEGIPKITGKGMVSLNGHCGPVAFLAVAISILAPDILRSDQEEAEGPRAEEEKPDGQAHQPMPDSHVGRELTRKKGILLQYRLRSTAHLPGPLLSMREPAPADGAALEHSEEDGSIYEMADDPDVWVRSRPCARDAHRKEICSVAIISGGQGYRNFGSALGSSGRLAPCGETDSTLLIWQVPLML.

Pro residues predominate over residues 1–10 (MASSNPPPQP). Residues 1 to 93 (MASSNPPPQP…GTGVPAWVSN (93 aa)) form a disordered region. Residues 26–46 (EAEDDPGEAFEFDDSDDEEDT) are compositionally biased toward acidic residues. Serine 40 carries the phosphoserine modification. A compositionally biased stretch (low complexity) spans 72-89 (PVTDPDPAAAPPGTGVPA). Phosphotyrosine is present on residues tyrosine 131 and tyrosine 152. Residues 159-193 (GAPRQAEDLGWSSSEFESYSEDSGEEAKPEVEPAK) are disordered. Basic and acidic residues predominate over residues 183–193 (EEAKPEVEPAK). Phosphoserine is present on serine 240. A DH domain is found at 275–462 (VRRHILGSIV…ETLAEKLNEQ (188 aa)). Residues 1089–1104 (QEEAEGPRAEEEKPDG) show a composition bias toward basic and acidic residues. Disordered stretches follow at residues 1089–1117 (QEEA…HVGR) and 1140–1161 (PLLS…SEED).

As to quaternary structure, interacts with RHOA, RHOB and RHOC.

The protein localises to the cytoplasm. Acts as a guanine nucleotide exchange factor (GEF) for RHOA, RHOB and RHOC. This is Rho guanine nucleotide exchange factor 10-like protein (ARHGEF10L) from Pongo abelii (Sumatran orangutan).